We begin with the raw amino-acid sequence, 1170 residues long: Chromosome partition protein Smc (1170 aa).

32-39 (PNGCGKSN) contributes to the ATP binding site. 3 coiled-coil regions span residues 169–215 (GVSK…AVVA), 245–365 (DRQR…DAAA), and 401–508 (EAAH…TQGK). One can recognise an SMC hinge domain in the interval 520–623 (ALPRLWKKLH…VADDLAQALA (104 aa)). 2 coiled-coil regions span residues 664 to 944 (QEIE…KEKL) and 983 to 1020 (ERKV…LQAT).

The protein belongs to the SMC family. Homodimer.

The protein resides in the cytoplasm. Its function is as follows. Required for chromosome condensation and partitioning. The chain is Chromosome partition protein Smc from Burkholderia pseudomallei (strain 1710b).